The following is a 37-amino-acid chain: Large ribosomal subunit protein bL36c (37 aa).

This sequence belongs to the bacterial ribosomal protein bL36 family.

The protein localises to the plastid. It localises to the chloroplast. The chain is Large ribosomal subunit protein bL36c from Oltmannsiellopsis viridis (Marine flagellate).